A 195-amino-acid polypeptide reads, in one-letter code: uncharacterized protein (195 aa).

Polar residues predominate over residues 1-11; that stretch reads MDYIVSPTSSE. Residues 1–118 are disordered; sequence MDYIVSPTSS…LDTEGGFVLS (118 aa). Residues 35–46 are compositionally biased toward acidic residues; it reads SPEDITDSDEQN. Low complexity predominate over residues 47–63; the sequence is DTTTTTSEMSSTSSVPS. A compositionally biased stretch (basic and acidic residues) spans 82-93; that stretch reads SDSKLIFDSDNK. Over residues 94–110 the composition is skewed to acidic residues; sequence DQDDEDDEDDEELEGLD.

This is an uncharacterized protein from Acanthamoeba polyphaga mimivirus (APMV).